The chain runs to 221 residues: Protein-L-isoaspartate O-methyltransferase (221 aa).

Residue S64 is part of the active site.

Belongs to the methyltransferase superfamily. L-isoaspartyl/D-aspartyl protein methyltransferase family.

The protein localises to the cytoplasm. The catalysed reaction is [protein]-L-isoaspartate + S-adenosyl-L-methionine = [protein]-L-isoaspartate alpha-methyl ester + S-adenosyl-L-homocysteine. Functionally, catalyzes the methyl esterification of L-isoaspartyl residues in peptides and proteins that result from spontaneous decomposition of normal L-aspartyl and L-asparaginyl residues. It plays a role in the repair and/or degradation of damaged proteins. This Cytophaga hutchinsonii (strain ATCC 33406 / DSM 1761 / CIP 103989 / NBRC 15051 / NCIMB 9469 / D465) protein is Protein-L-isoaspartate O-methyltransferase.